A 276-amino-acid polypeptide reads, in one-letter code: Extracellular metalloprotease 1 (276 aa).

A signal peptide spans 1 to 18 (MRVSVPVLALAFGSLAAA). His-191 is a Zn(2+) binding site. Glu-192 is a catalytic residue. His-195 is a binding site for Zn(2+). Positions 211–233 (GDYVSDTPPQRSPSSGCPVGRDS) are disordered. A disulfide bridge connects residues Cys-227 and Cys-253.

This sequence belongs to the peptidase M43B family.

The protein resides in the secreted. Secreted metalloproteinase that allows assimilation of proteinaceous substrates. Pays a pivotal role as a pathogenicity determinant during infections and contributes to the ability of the pathogen to persist within the mammalian host. Digests an immunodominant cell surface antigen (SOWgp) and prevents host recognition of endospores during the phase of development when these fungal cells are most vulnerable to phagocytic cell defenses. This chain is Extracellular metalloprotease 1 (MEP1), found in Coccidioides posadasii (strain C735) (Valley fever fungus).